The chain runs to 285 residues: Transmembrane protein 53-B (285 aa).

A helical transmembrane segment spans residues 165–185 (FLALAAFAIMVIILRIVLYPV).

It belongs to the TMEM53 family.

It is found in the nucleus outer membrane. In terms of biological role, ensures normal bone formation, through the negative regulation of bone morphogenetic protein (BMP) signaling in osteoblast lineage cells by blocking cytoplasm-nucleus translocation of phosphorylated SMAD proteins. This chain is Transmembrane protein 53-B (tmem53-b), found in Xenopus laevis (African clawed frog).